We begin with the raw amino-acid sequence, 113 residues long: C-C motif chemokine 15 (113 aa).

The N-terminal stretch at 1–21 (MKVSVAALSCLMLVAVLGSQA) is a signal peptide. 3 disulfide bridges follow: Cys-53/Cys-77, Cys-54/Cys-93, and Cys-64/Cys-104.

This sequence belongs to the intercrine beta (chemokine CC) family. Monomer. Post-translationally, the N-terminal is proteolytically cleaved by proteases associated with inflammatory responses. The processed forms CCL15(22-92), CCL15(25-92) and CCL15(29-92) exhibit increase in CCR1-mediated signaling and chemotaxis assays in vitro. In terms of tissue distribution, most abundant in heart, skeletal muscle and adrenal gland. Lower levels in placenta, liver, pancreas and bone marrow. CCL15(22-92), CCL15(25-92) and CCL15(29-92) are found in high levels in synovial fluids from rheumatoid patients.

It localises to the secreted. Its function is as follows. Chemotactic factor that attracts T-cells and monocytes, but not neutrophils, eosinophils, or B-cells. Acts mainly via CC chemokine receptor CCR1. Also binds to CCR3. CCL15(22-92), CCL15(25-92) and CCL15(29-92) are more potent chemoattractants than the CCL15. This Homo sapiens (Human) protein is C-C motif chemokine 15 (CCL15).